The primary structure comprises 469 residues: 3-isopropylmalate dehydratase large subunit (469 aa).

Residues cysteine 347, cysteine 410, and cysteine 413 each contribute to the [4Fe-4S] cluster site.

This sequence belongs to the aconitase/IPM isomerase family. LeuC type 1 subfamily. In terms of assembly, heterodimer of LeuC and LeuD. Requires [4Fe-4S] cluster as cofactor.

It catalyses the reaction (2R,3S)-3-isopropylmalate = (2S)-2-isopropylmalate. It functions in the pathway amino-acid biosynthesis; L-leucine biosynthesis; L-leucine from 3-methyl-2-oxobutanoate: step 2/4. Functionally, catalyzes the isomerization between 2-isopropylmalate and 3-isopropylmalate, via the formation of 2-isopropylmaleate. This chain is 3-isopropylmalate dehydratase large subunit, found in Cupriavidus pinatubonensis (strain JMP 134 / LMG 1197) (Cupriavidus necator (strain JMP 134)).